We begin with the raw amino-acid sequence, 253 residues long: Phosphoadenosine 5'-phosphosulfate reductase (253 aa).

The active-site Nucleophile; cysteine thiosulfonate intermediate is C239.

This sequence belongs to the PAPS reductase family. CysH subfamily.

The protein resides in the cytoplasm. The enzyme catalyses [thioredoxin]-disulfide + sulfite + adenosine 3',5'-bisphosphate + 2 H(+) = [thioredoxin]-dithiol + 3'-phosphoadenylyl sulfate. It functions in the pathway sulfur metabolism; hydrogen sulfide biosynthesis; sulfite from sulfate: step 3/3. Functionally, catalyzes the formation of sulfite from phosphoadenosine 5'-phosphosulfate (PAPS) using thioredoxin as an electron donor. The sequence is that of Phosphoadenosine 5'-phosphosulfate reductase from Photobacterium profundum (strain SS9).